A 98-amino-acid chain; its full sequence is Putative pterin-4-alpha-carbinolamine dehydratase (98 aa).

The protein belongs to the pterin-4-alpha-carbinolamine dehydratase family.

It catalyses the reaction (4aS,6R)-4a-hydroxy-L-erythro-5,6,7,8-tetrahydrobiopterin = (6R)-L-erythro-6,7-dihydrobiopterin + H2O. The chain is Putative pterin-4-alpha-carbinolamine dehydratase from Jannaschia sp. (strain CCS1).